The primary structure comprises 317 residues: Acetyl-coenzyme A carboxylase carboxyl transferase subunit alpha (317 aa).

The region spanning 40–293 is the CoA carboxyltransferase C-terminal domain; the sequence is LEVRVREAIV…GDVIANALGE (254 aa).

It belongs to the AccA family. Acetyl-CoA carboxylase is a heterohexamer composed of biotin carboxyl carrier protein (AccB), biotin carboxylase (AccC) and two subunits each of ACCase subunit alpha (AccA) and ACCase subunit beta (AccD).

It is found in the cytoplasm. It carries out the reaction N(6)-carboxybiotinyl-L-lysyl-[protein] + acetyl-CoA = N(6)-biotinyl-L-lysyl-[protein] + malonyl-CoA. Its pathway is lipid metabolism; malonyl-CoA biosynthesis; malonyl-CoA from acetyl-CoA: step 1/1. In terms of biological role, component of the acetyl coenzyme A carboxylase (ACC) complex. First, biotin carboxylase catalyzes the carboxylation of biotin on its carrier protein (BCCP) and then the CO(2) group is transferred by the carboxyltransferase to acetyl-CoA to form malonyl-CoA. This Rhizobium etli (strain ATCC 51251 / DSM 11541 / JCM 21823 / NBRC 15573 / CFN 42) protein is Acetyl-coenzyme A carboxylase carboxyl transferase subunit alpha.